The sequence spans 177 residues: Apoptosis regulatory protein Siva (177 aa).

Residue Tyr34 is modified to Phosphotyrosine; by ABL2. Positions 36–55 (REVFERTKQLLFQGAQAYRD) are interaction with BCL2L1 isoform Bcl-x(L) and inhibition of BCL2L1 anti-apoptotic activity.

Binds through its N-terminal region to the C-terminus of CD27 and to PXMP2/PMP22. Binds to the C-terminus of TNFRSF18/GITR. Binds to BCL2L1/BCLX isoform Bcl-x(L) but not to BAX. Zn(2+) is required as a cofactor. In post-ischemic kidney, found in cells lining the S3 segment of proximal tubules at 12 hours and 1 day post-ischemia. At five and seven days post-ischemia, found in epithelial cells of papillary proliferations in regenerating tubules.

It localises to the cytoplasm. It is found in the nucleus. Functionally, induces CD27-mediated apoptosis. Inhibits BCL2L1 isoform Bcl-x(L) anti-apoptotic activity. Inhibits activation of NF-kappa-B and promotes T-cell receptor-mediated apoptosis. The polypeptide is Apoptosis regulatory protein Siva (Siva1) (Rattus norvegicus (Rat)).